The following is a 226-amino-acid chain: DELTA-alicitoxin-Pse1b (226 aa).

A signal peptide spans 1-21 (MRHFVVFLYMFLALSIPTAFA). Positions 22–45 (KKHIVTKKGNHQDITNDNEGENAE) are excised as a propeptide. The plays an important role in the hemolytic activity stretch occupies residues 50 to 59 (TVAGAVIAGG). The N-terminal region stretch occupies residues 58-77 (GGELALKILTKILYEIGKID). Residues serine 101, valine 134, serine 152, proline 154, tyrosine 180, and tyrosine 184 each coordinate phosphocholine. Residues 152-167 (SVPFDYNLYSNWWNVK) form a trp-rich region, which is important for the binding to lipid membrane region.

The protein belongs to the actinoporin family. Sea anemone subfamily. As to quaternary structure, octamer or nonamer in membranes. Monomer in the soluble state.

It localises to the secreted. The protein localises to the nematocyst. The protein resides in the target cell membrane. Functionally, pore-forming protein that forms cations-selective hydrophilic pores of around 1 nm and causes cytolysis. Pore formation is a multi-step process that involves specific recognition of membrane sphingomyelin (but neither cholesterol nor phosphatidylcholine) using aromatic rich region and adjacent phosphocholine (POC) binding site, firm binding to the membrane (mainly driven by hydrophobic interactions) accompanied by the transfer of the N-terminal region to the lipid-water interface and finally pore formation after oligomerization of monomers. In Phyllodiscus semoni (Night anemone), this protein is DELTA-alicitoxin-Pse1b.